The primary structure comprises 130 residues: Small ribosomal subunit protein eS6 (130 aa).

The protein belongs to the eukaryotic ribosomal protein eS6 family.

In Methanosphaera stadtmanae (strain ATCC 43021 / DSM 3091 / JCM 11832 / MCB-3), this protein is Small ribosomal subunit protein eS6.